A 147-amino-acid polypeptide reads, in one-letter code: 3-dehydroquinate dehydratase (147 aa).

Catalysis depends on tyrosine 22, which acts as the Proton acceptor. Substrate contacts are provided by asparagine 73, histidine 79, and aspartate 86. The active-site Proton donor is histidine 99. Residues 100–101 (LS) and arginine 110 contribute to the substrate site.

Belongs to the type-II 3-dehydroquinase family. In terms of assembly, homododecamer.

It catalyses the reaction 3-dehydroquinate = 3-dehydroshikimate + H2O. Its pathway is metabolic intermediate biosynthesis; chorismate biosynthesis; chorismate from D-erythrose 4-phosphate and phosphoenolpyruvate: step 3/7. In terms of biological role, catalyzes a trans-dehydration via an enolate intermediate. The polypeptide is 3-dehydroquinate dehydratase (Synechococcus sp. (strain WH7803)).